Here is a 164-residue protein sequence, read N- to C-terminus: Glutaredoxin-2, mitochondrial (164 aa).

Residues 1–19 (MIWRRAALAGTRLVWSRSG) constitute a mitochondrion transit peptide. A Phosphoserine modification is found at Ser20. Residues 57 to 157 (VNQIQETISD…PLVHQCYLKK (101 aa)) enclose the Glutaredoxin domain. Cys68 is a binding site for [2Fe-2S] cluster. Glutathione is bound at residue Lys74. Cys77 carries the post-translational modification S-glutathionyl cysteine; alternate. A disulfide bridge links Cys77 with Cys80. 2 residues coordinate glutathione: Gln109 and Val121. Cys153 contacts [2Fe-2S] cluster.

Belongs to the glutaredoxin family. Monomer; active form. Homodimer; inactive form. The homodimer is probably linked by 1 2Fe-2S cluster. In terms of tissue distribution, widely expressed. Expressed in brain, heart, skeletal muscle, colon, thymus, spleen, kidney, liver, small intestine, placenta and lung. Not expressed in peripheral blood leukocytes.

It is found in the mitochondrion. The protein resides in the nucleus. Its activity is regulated as follows. The 2Fe-2S present in the homodimer leads to inactivation of the enzyme. The 2Fe-2S may serve as a redox sensor: the presence of one-electron oxidants or reductants leading to the loss of the 2Fe-2S cluster, subsequent monomerization and activation of the enzyme. Unlike other glutaredoxins, it is not inhibited by oxidation of structural Cys residues. In terms of biological role, glutathione-dependent oxidoreductase that facilitates the maintenance of mitochondrial redox homeostasis upon induction of apoptosis by oxidative stress. Involved in response to hydrogen peroxide and regulation of apoptosis caused by oxidative stress. Acts as a very efficient catalyst of monothiol reactions because of its high affinity for protein glutathione-mixed disulfides. Can receive electrons not only from glutathione (GSH), but also from thioredoxin reductase supporting both monothiol and dithiol reactions. Efficiently catalyzes both glutathionylation and deglutathionylation of mitochondrial complex I, which in turn regulates the superoxide production by the complex. Overexpression decreases the susceptibility to apoptosis and prevents loss of cardiolipin and cytochrome c release. The chain is Glutaredoxin-2, mitochondrial (GLRX2) from Homo sapiens (Human).